A 497-amino-acid polypeptide reads, in one-letter code: Cytochrome P450 monooxygenase 151 (497 aa).

The helical transmembrane segment at 1–21 (MTDLVPVYYAFAGVVAALLFY) threads the bilayer. N292 and N397 each carry an N-linked (GlcNAc...) asparagine glycan. C441 contacts heme.

The protein belongs to the cytochrome P450 family. Heme serves as cofactor.

The protein resides in the membrane. It functions in the pathway secondary metabolite biosynthesis. Its function is as follows. Cytochrome P450 monooxygenase that is able to use dehydroabietic acid and testosterone as substrates for oxidation, suggesting that the natural substrate(s) may be structurally related to steroid compounds. This chain is Cytochrome P450 monooxygenase 151, found in Postia placenta (strain ATCC 44394 / Madison 698-R) (Brown rot fungus).